The following is a 211-amino-acid chain: MTTLAMLLTLADSRLPTGAHVHSGGVEEAITAGLVTNLSSLEAFLKRRIRSHGLVTASIAAAVQRGDLAPDGADRETDARTPSPAARDASRSQGRGLVRLARAIWPEADWDALGAKPHLAVAAGRVGALAGLTPEHLALQLVYTTMTGSATAAQRLLALDPTDVAVLTFQLSELCTTTAAEAAIGLADLSDPLLDTLAQHHAERERPLFAS.

A disordered region spans residues 68–93 (LAPDGADRETDARTPSPAARDASRSQ).

Belongs to the UreF family. As to quaternary structure, ureD, UreF and UreG form a complex that acts as a GTP-hydrolysis-dependent molecular chaperone, activating the urease apoprotein by helping to assemble the nickel containing metallocenter of UreC. The UreE protein probably delivers the nickel.

Its subcellular location is the cytoplasm. In terms of biological role, required for maturation of urease via the functional incorporation of the urease nickel metallocenter. The protein is Urease accessory protein UreF of Mycobacterium marinum (strain ATCC BAA-535 / M).